Reading from the N-terminus, the 502-residue chain is Cytochrome P450 3A40 (502 aa).

Cys443 contributes to the heme binding site.

It belongs to the cytochrome P450 family. Heme is required as a cofactor.

The protein localises to the endoplasmic reticulum membrane. It is found in the microsome membrane. The enzyme catalyses an organic molecule + reduced [NADPH--hemoprotein reductase] + O2 = an alcohol + oxidized [NADPH--hemoprotein reductase] + H2O + H(+). The sequence is that of Cytochrome P450 3A40 (cyp3a40) from Oryzias latipes (Japanese rice fish).